The sequence spans 311 residues: Light-independent protochlorophyllide reductase iron-sulfur ATP-binding protein (311 aa).

ATP is bound by residues 10–15 and K39; that span reads GIGKST. Residue S14 participates in Mg(2+) binding. 2 residues coordinate [4Fe-4S] cluster: C95 and C129. Residue 180–181 participates in ATP binding; the sequence is NR.

This sequence belongs to the NifH/BchL/ChlL family. Homodimer. Protochlorophyllide reductase is composed of three subunits; ChlL, ChlN and ChlB. [4Fe-4S] cluster serves as cofactor.

Its subcellular location is the plastid. It localises to the chloroplast. The enzyme catalyses chlorophyllide a + oxidized 2[4Fe-4S]-[ferredoxin] + 2 ADP + 2 phosphate = protochlorophyllide a + reduced 2[4Fe-4S]-[ferredoxin] + 2 ATP + 2 H2O. It functions in the pathway porphyrin-containing compound metabolism; chlorophyll biosynthesis (light-independent). Functionally, component of the dark-operative protochlorophyllide reductase (DPOR) that uses Mg-ATP and reduced ferredoxin to reduce ring D of protochlorophyllide (Pchlide) to form chlorophyllide a (Chlide). This reaction is light-independent. The L component serves as a unique electron donor to the NB-component of the complex, and binds Mg-ATP. This is Light-independent protochlorophyllide reductase iron-sulfur ATP-binding protein from Oltmannsiellopsis viridis (Marine flagellate).